The following is a 217-amino-acid chain: MQVSQYLYQNAQSIWGDCISHPFVQGIGRGTLERDKFRFYIIQDYLFLLEYAKVFALGVVKACDEAVMREFSNAIQDILNNEMSIHNHYIRELQITQKELQNACPTLANKSYTSYMLAEGFKGSIKEVAAAVLSCGWSYLVIAQNLSQIPNALEHAFYGHWIKGYSSKEFQACVNWNINLLDSLTLASSKQEIEKLKEIFITTSEYEYLFWDMAYQS.

Asp-44 serves as a coordination point for substrate. Catalysis depends on Cys-135, which acts as the Nucleophile. Residues Tyr-139 and Tyr-165 each coordinate substrate. The active-site Proton donor is Glu-207.

This sequence belongs to the TenA family. Homotetramer.

The enzyme catalyses 4-amino-5-aminomethyl-2-methylpyrimidine + H2O = 4-amino-5-hydroxymethyl-2-methylpyrimidine + NH4(+). The protein operates within cofactor biosynthesis; thiamine diphosphate biosynthesis. Catalyzes an amino-pyrimidine hydrolysis reaction at the C5' of the pyrimidine moiety of thiamine compounds to give a hydroxymethylpyrimidine (HMP). Displays low activity on 4-amino-5-aminomethyl-2-methylpyrimidine as substrate, indicating that the enzyme may act on a different HMP precursor that may derive from the human stomach food assumption or processing. Is probably involved in thiamine biosynthesis. Does not display thiaminase II activity, as it is unable to hydrolyze thiamine. The chain is Aminopyrimidine aminohydrolase from Helicobacter pylori (Campylobacter pylori).